The chain runs to 409 residues: Tyrosine--tRNA ligase (409 aa).

A 'HIGH' region motif is present at residues 43–52; the sequence is PTAPDLHLGH. The 'KMSKS' region motif lies at 227 to 231; the sequence is KMSKS. Residue K230 participates in ATP binding. An S4 RNA-binding domain is found at 338–399; the sequence is LALPQLLKLA…GKRKFAKVTL (62 aa).

Belongs to the class-I aminoacyl-tRNA synthetase family. TyrS type 2 subfamily. In terms of assembly, homodimer.

It is found in the cytoplasm. The catalysed reaction is tRNA(Tyr) + L-tyrosine + ATP = L-tyrosyl-tRNA(Tyr) + AMP + diphosphate + H(+). Catalyzes the attachment of tyrosine to tRNA(Tyr) in a two-step reaction: tyrosine is first activated by ATP to form Tyr-AMP and then transferred to the acceptor end of tRNA(Tyr). The sequence is that of Tyrosine--tRNA ligase from Nitrosomonas europaea (strain ATCC 19718 / CIP 103999 / KCTC 2705 / NBRC 14298).